The chain runs to 563 residues: E3 ubiquitin-protein ligase IpaH2.5 (563 aa).

Positions 1-270 (MIKSTNIQVI…PDYSGPQIFF (270 aa)) are interaction with target proteins. LRR repeat units follow at residues 69–90 (LQNQEAELNLSELDLKTLPDLP), 91–115 (PQITTLEIRKNLLTHLPDLPPMLKV), 117–130 (HAQFNQLESLPALP), 131–150 (ETLEELNAGDNKIKELPFLP), 151–170 (ENLTHLRVHNNRLHILPLLP), 171–195 (PELKLLVVSGNRLDSIPPFPDKLEG), 197–209 (ALANNFIEQLPEL), and 210–233 (PFSMNRAVLMNNNLTTLPESVLRL). A linker region spans residues 271 to 281 (SMGNSATISAP). The segment at 282-563 (EHSLADAVTA…YRQLTDEVLA (282 aa)) is E3 ubiquitin-protein ligase catalytic domain. The region spanning 284 to 563 (SLADAVTAWF…YRQLTDEVLA (280 aa)) is the NEL domain. Catalysis depends on C368, which acts as the Glycyl thioester intermediate.

Belongs to the LRR-containing bacterial E3 ligase family. As to quaternary structure, interacts with human RBCK1/HOIL-1 and RNF31/HOIP components of the LUBAC complex. Ubiquitinated in the presence of host E1 ubiquitin-activating enzyme, E2 ubiquitin-conjugating enzyme and ubiquitin.

The protein resides in the secreted. Its subcellular location is the host cytoplasm. The enzyme catalyses S-ubiquitinyl-[E2 ubiquitin-conjugating enzyme]-L-cysteine + [acceptor protein]-L-lysine = [E2 ubiquitin-conjugating enzyme]-L-cysteine + N(6)-ubiquitinyl-[acceptor protein]-L-lysine.. It functions in the pathway protein modification; protein ubiquitination. Its activity is regulated as follows. Exists in an autoinhibited state in the absence of substrate protein, probably due to interactions of the leucine-rich repeat domain with the catalytic domain. Is activated upon binding to a substrate protein. Its function is as follows. E3 ubiquitin-protein ligase effector that inhibits host cell innate immunity during bacterial infection by catalyzing 'Lys-48'-linked polyubiquitination and subsequent degradation of host RNF31/HOIP. Host RNF31/HOIP is the catalytic component of the LUBAC complex, which conjugates linear ('Met-1'-linked) polyubiquitin chains at the surface of bacteria invading the host cytosol to form the ubiquitin coat surrounding bacteria. The bacterial ubiquitin coat acts as an 'eat-me' signal for xenophagy and promotes NF-kappa-B activation. In Shigella flexneri, this protein is E3 ubiquitin-protein ligase IpaH2.5.